The sequence spans 41 residues: Disintegrin viperistatin (41 aa).

4 disulfides stabilise this stretch: C1/C10, C6/C29, C7/C34, and C19/C36. Residues 1–41 (CTTGPCCRQCKLKPAGTTCWKTSRTSHYCTGKSCDCPVYQG) enclose the Disintegrin domain. Positions 21 to 23 (KTS) match the Cell attachment site; atypical (KTS) motif.

As to quaternary structure, monomer. As to expression, expressed by the venom gland.

Its subcellular location is the secreted. Functionally, potent and highly selective inhibitor of alpha-1/beta-1 (ITGA1/ITGB1) integrin binding to collagen I and IV. Is about 25-fold more potent than obtustatin inhibiting the binding of this integrin to collagen IV. This is Disintegrin viperistatin from Daboia palaestinae (Palestine viper).